A 520-amino-acid polypeptide reads, in one-letter code: Glutamate--cysteine ligase (520 aa).

It belongs to the glutamate--cysteine ligase type 1 family. Type 1 subfamily.

The catalysed reaction is L-cysteine + L-glutamate + ATP = gamma-L-glutamyl-L-cysteine + ADP + phosphate + H(+). Its pathway is sulfur metabolism; glutathione biosynthesis; glutathione from L-cysteine and L-glutamate: step 1/2. The protein is Glutamate--cysteine ligase of Leptospira interrogans serogroup Icterohaemorrhagiae serovar copenhageni (strain Fiocruz L1-130).